The sequence spans 145 residues: Large ribosomal subunit protein uL15 (145 aa).

Positions 1–58 (MFSLLKPKGAAKRRKIVGRGPGSGLGKTSGRGQKGQKARNTSPRLGFEGGQTPLYRRL) are disordered. Residues 19-33 (RGPGSGLGKTSGRGQ) are compositionally biased toward gly residues.

It belongs to the universal ribosomal protein uL15 family. In terms of assembly, part of the 50S ribosomal subunit.

Functionally, binds to the 23S rRNA. The chain is Large ribosomal subunit protein uL15 from Borreliella afzelii (strain PKo) (Borrelia afzelii).